Here is a 276-residue protein sequence, read N- to C-terminus: Putative ankyrin repeat protein R838 (276 aa).

4 ANK repeats span residues 134–163 (DGDN…DPRS), 164–193 (DYDY…DISS), 195–223 (NHWP…DVRA), and 225–253 (NYNP…EIGS). The interval 254–276 (VSDDDTYDSDSSDYSEDDSESIN) is disordered. Over residues 255–276 (SDDDTYDSDSSDYSEDDSESIN) the composition is skewed to acidic residues.

The protein is Putative ankyrin repeat protein R838 of Acanthamoeba polyphaga (Amoeba).